We begin with the raw amino-acid sequence, 562 residues long: Dihydroxy-acid dehydratase (562 aa).

Cys-55 provides a ligand contact to [2Fe-2S] cluster. Asp-87 contributes to the Mg(2+) binding site. Residue Cys-128 coordinates [2Fe-2S] cluster. Positions 129 and 130 each coordinate Mg(2+). Lys-130 is modified (N6-carboxylysine). A [2Fe-2S] cluster-binding site is contributed by Cys-200. A Mg(2+)-binding site is contributed by Glu-451. Ser-477 serves as the catalytic Proton acceptor.

The protein belongs to the IlvD/Edd family. Homodimer. [2Fe-2S] cluster is required as a cofactor. Requires Mg(2+) as cofactor.

The enzyme catalyses (2R)-2,3-dihydroxy-3-methylbutanoate = 3-methyl-2-oxobutanoate + H2O. It carries out the reaction (2R,3R)-2,3-dihydroxy-3-methylpentanoate = (S)-3-methyl-2-oxopentanoate + H2O. Its pathway is amino-acid biosynthesis; L-isoleucine biosynthesis; L-isoleucine from 2-oxobutanoate: step 3/4. The protein operates within amino-acid biosynthesis; L-valine biosynthesis; L-valine from pyruvate: step 3/4. Its function is as follows. Functions in the biosynthesis of branched-chain amino acids. Catalyzes the dehydration of (2R,3R)-2,3-dihydroxy-3-methylpentanoate (2,3-dihydroxy-3-methylvalerate) into 2-oxo-3-methylpentanoate (2-oxo-3-methylvalerate) and of (2R)-2,3-dihydroxy-3-methylbutanoate (2,3-dihydroxyisovalerate) into 2-oxo-3-methylbutanoate (2-oxoisovalerate), the penultimate precursor to L-isoleucine and L-valine, respectively. The sequence is that of Dihydroxy-acid dehydratase from Cytophaga hutchinsonii (strain ATCC 33406 / DSM 1761 / CIP 103989 / NBRC 15051 / NCIMB 9469 / D465).